A 226-amino-acid polypeptide reads, in one-letter code: MSDSTTIALLSGGLDSATAAALAIEAGQKVIGLSFDYGQRHRKELQAAEELAACMGLTEHHVISVNLGSWGGSSLTDLTQTVPSEGVVDGVIPNTYVPGRNTVFIAIGLSLAEARHANRLVLGVNAMDYSGYPDCRPDYLKAYQSLADLANKAGREGHGIKLWAPLMHWHKKRIVQEALRLGVPIDKTWSCYSGGDHACGICDSCRIRDAALSEAGRSDLCSKPAP.

Position 10–20 (10–20) interacts with ATP; sequence LSGGLDSATAA. Positions 191, 199, 202, and 205 each coordinate Zn(2+).

Belongs to the QueC family. Zn(2+) is required as a cofactor.

The catalysed reaction is 7-carboxy-7-deazaguanine + NH4(+) + ATP = 7-cyano-7-deazaguanine + ADP + phosphate + H2O + H(+). It functions in the pathway purine metabolism; 7-cyano-7-deazaguanine biosynthesis. Functionally, catalyzes the ATP-dependent conversion of 7-carboxy-7-deazaguanine (CDG) to 7-cyano-7-deazaguanine (preQ(0)). The polypeptide is 7-cyano-7-deazaguanine synthase (Prochlorococcus marinus (strain MIT 9303)).